Consider the following 465-residue polypeptide: Neutrophil collagenase (465 aa).

Positions 1-20 (MFRLKTLPLLIFLHTQLANA) are cleaved as a signal peptide. The propeptide at 21–100 (FPVPEHLEEK…CGVPDSGDFL (80 aa)) is activation peptide. Asparagine 55 carries N-linked (GlcNAc...) asparagine glycosylation. Positions 89 to 96 (PRCGVPDS) match the Cysteine switch motif. Residue cysteine 91 coordinates Zn(2+). N-linked (GlcNAc...) asparagine glycosylation is present at asparagine 112. Residue aspartate 157 participates in Ca(2+) binding. The Zn(2+) site is built by histidine 167 and aspartate 169. Residues aspartate 174, glycine 175, asparagine 177, and isoleucine 179 each coordinate Ca(2+). Position 182 (histidine 182) interacts with Zn(2+). Ca(2+) contacts are provided by glycine 189, glycine 191, and aspartate 193. Residue histidine 195 coordinates Zn(2+). Ca(2+) contacts are provided by aspartate 197 and glutamate 200. Histidine 217 contacts Zn(2+). Glutamate 218 is an active-site residue. The Zn(2+) site is built by histidine 221 and histidine 227. Hemopexin repeat units follow at residues 276–325 (PKAC…WPFL), 326–372 (PNGL…GFPR), 374–420 (VQAI…FPGV), and 421–464 (NCRV…WLNC). Cysteine 279 and cysteine 464 form a disulfide bridge. Aspartate 286 is a binding site for Ca(2+). Positions 378 and 425 each coordinate Ca(2+).

It belongs to the peptidase M10A family. It depends on Ca(2+) as a cofactor. Zn(2+) is required as a cofactor. Neutrophils. Expressed in uterus. Low levels in kidney and muscle.

The protein resides in the cytoplasmic granule. It is found in the secreted. Its subcellular location is the extracellular space. It localises to the extracellular matrix. The enzyme catalyses Cleavage of interstitial collagens in the triple helical domain. Unlike EC 3.4.24.7, this enzyme cleaves type III collagen more slowly than type I.. Cannot be activated without removal of the activation peptide. Activated by matrilysin. Its function is as follows. Can degrade fibrillar type I, II, and III collagens. May play a role in the degradation of collagen fibers during uterine involution. This Mus musculus (Mouse) protein is Neutrophil collagenase (Mmp8).